The following is an 852-amino-acid chain: Protein mono-ADP-ribosyltransferase PARP8 (852 aa).

Disordered stretches follow at residues 113 to 134 (NGEE…NDSE) and 289 to 310 (SPSY…EQDG). The span at 123–134 (VEEDSEGDNDSE) shows a compositional bias: acidic residues. An ADP-ribosylcysteine mark is found at Cys332, Cys366, Cys375, and Cys394. The region spanning 615 to 842 (EMTQAPYLEI…QEGGIHKEIL (228 aa)) is the PARP catalytic domain. The interval 748-775 (QKVSSKDEPASSSKSSNASQSQKKGQQS) is disordered. Residues 757-775 (ASSSKSSNASQSQKKGQQS) are compositionally biased toward low complexity.

This sequence belongs to the ARTD/PARP family. Auto-mono-ADP-ribosylated.

The catalysed reaction is L-cysteinyl-[protein] + NAD(+) = S-(ADP-D-ribosyl)-L-cysteinyl-[protein] + nicotinamide + H(+). In terms of biological role, mono-ADP-ribosyltransferase that mediates mono-ADP-ribosylation of target proteins. The protein is Protein mono-ADP-ribosyltransferase PARP8 of Mus musculus (Mouse).